Consider the following 200-residue polypeptide: NADH-quinone oxidoreductase subunit I (200 aa).

4Fe-4S ferredoxin-type domains lie at 73 to 102 (RLLE…METT) and 112 to 141 (LNYS…HGGD). Cys82, Cys85, Cys88, Cys92, Cys121, Cys124, Cys127, and Cys131 together coordinate [4Fe-4S] cluster.

The protein belongs to the complex I 23 kDa subunit family. In terms of assembly, NDH-1 is composed of 14 different subunits. Subunits NuoA, H, J, K, L, M, N constitute the membrane sector of the complex. Requires [4Fe-4S] cluster as cofactor.

It localises to the cell inner membrane. The enzyme catalyses a quinone + NADH + 5 H(+)(in) = a quinol + NAD(+) + 4 H(+)(out). Functionally, NDH-1 shuttles electrons from NADH, via FMN and iron-sulfur (Fe-S) centers, to quinones in the respiratory chain. The immediate electron acceptor for the enzyme in this species is believed to be ubiquinone. Couples the redox reaction to proton translocation (for every two electrons transferred, four hydrogen ions are translocated across the cytoplasmic membrane), and thus conserves the redox energy in a proton gradient. The sequence is that of NADH-quinone oxidoreductase subunit I from Campylobacter hominis (strain ATCC BAA-381 / DSM 21671 / CCUG 45161 / LMG 19568 / NCTC 13146 / CH001A).